The chain runs to 433 residues: Arabinooligosaccharide-binding protein (433 aa).

Positions 1-21 (MKKMTVCFLVLMMLLTLVIAG) are cleaved as a signal peptide. Cys22 carries N-palmitoyl cysteine lipidation. Cys22 carries the S-diacylglycerol cysteine lipid modification.

The protein belongs to the bacterial solute-binding protein 1 family. The complex is composed of two ATP-binding proteins (MsmX), two transmembrane proteins (AraP and AraQ) and a solute-binding protein (AraN).

The protein resides in the cell membrane. Functionally, part of the ABC transporter complex AraNPQ involved in the uptake of arabinooligosaccharides. Transports alpha-1,5-arabinooligosaccharides, at least up to four L-arabinosyl units. AraN captures the substrate and delivers it to the two transmembrane components. The protein is Arabinooligosaccharide-binding protein of Bacillus subtilis (strain 168).